We begin with the raw amino-acid sequence, 250 residues long: Probable replication-associated protein repA2 (250 aa).

The protein belongs to the IncFII RepA family.

In terms of biological role, this protein is essential for plasmid replication; it is involved in copy control functions. The sequence is that of Probable replication-associated protein repA2 (repA2) from Buchnera aphidicola subsp. Acyrthosiphon pisum (strain APS) (Acyrthosiphon pisum symbiotic bacterium).